We begin with the raw amino-acid sequence, 825 residues long: Taste receptor cell protein 1 (825 aa).

Residues 1 to 21 (MDKQWFPAAGILLAALLVVSA) form the signal peptide. Disordered stretches follow at residues 66–97 (EREPEALGRRAGGLSTEGAGGQESPSMPGPSG) and 299–322 (TSPSQASSLHSPRPSSASPLSASP). Residues 302 to 322 (SQASSLHSPRPSSASPLSASP) are compositionally biased toward low complexity.

Expression is restricted to circumvallate papillae.

The polypeptide is Taste receptor cell protein 1 (Trcg1) (Mus musculus (Mouse)).